A 474-amino-acid chain; its full sequence is Sialyltransferase-like protein 1 (474 aa).

Topologically, residues 1-14 are cytoplasmic; sequence MRSHQAGRKLPLLQ. The helical; Signal-anchor for type II membrane protein transmembrane segment at 15-35 threads the bilayer; the sequence is LLGCVAVFSVFVFTIQSSFFA. Topologically, residues 36-474 are lumenal; that stretch reads DNNRKLDLQP…CVRHPLKLDT (439 aa). Asparagine 88, asparagine 120, asparagine 155, and asparagine 243 each carry an N-linked (GlcNAc...) asparagine glycan. Positions 376 to 421 are disordered; the sequence is RLQRSQQPTSSKRDGSGQFGNCKVWGDADPTKGPVSGSPDMSETRK.

It belongs to the glycosyltransferase 29 family. Highly expressed in inflorescences and siliques and at lower levels in roots, leaves and stems.

The protein localises to the golgi apparatus membrane. In terms of biological role, required for normal pollen grain germination and pollen tube growth. May not be required for pollen development and female gametophytic function. The protein is Sialyltransferase-like protein 1 of Arabidopsis thaliana (Mouse-ear cress).